Consider the following 279-residue polypeptide: HTH-type transcriptional regulator HdfR (279 aa).

Positions 1 to 58 (MDTELLKTFLEVSRTRHFGRAAESLYLTQSAVSFRIRQLENQLGVNLFTRHRNNIRLT) constitute an HTH lysR-type domain. A DNA-binding region (H-T-H motif) is located at residues 18-37 (FGRAAESLYLTQSAVSFRIR).

It belongs to the LysR transcriptional regulatory family.

Negatively regulates the transcription of the flagellar master operon flhDC by binding to the upstream region of the operon. This Shigella boydii serotype 18 (strain CDC 3083-94 / BS512) protein is HTH-type transcriptional regulator HdfR.